Reading from the N-terminus, the 289-residue chain is tRNA(Ile)-lysidine synthase (289 aa).

Residue 11-16 participates in ATP binding; it reads SGGPDS.

The protein belongs to the tRNA(Ile)-lysidine synthase family.

Its subcellular location is the cytoplasm. It carries out the reaction cytidine(34) in tRNA(Ile2) + L-lysine + ATP = lysidine(34) in tRNA(Ile2) + AMP + diphosphate + H(+). Its function is as follows. Ligates lysine onto the cytidine present at position 34 of the AUA codon-specific tRNA(Ile) that contains the anticodon CAU, in an ATP-dependent manner. Cytidine is converted to lysidine, thus changing the amino acid specificity of the tRNA from methionine to isoleucine. This is tRNA(Ile)-lysidine synthase from Mycoplasma pneumoniae (strain ATCC 29342 / M129 / Subtype 1) (Mycoplasmoides pneumoniae).